We begin with the raw amino-acid sequence, 542 residues long: Chaperonin GroEL (542 aa).

ATP is bound by residues 29-32, 86-90, Gly414, and Asp491; these read TLGP and DGTTT.

It belongs to the chaperonin (HSP60) family. Forms a cylinder of 14 subunits composed of two heptameric rings stacked back-to-back. Interacts with the co-chaperonin GroES.

It is found in the cytoplasm. It catalyses the reaction ATP + H2O + a folded polypeptide = ADP + phosphate + an unfolded polypeptide.. In terms of biological role, together with its co-chaperonin GroES, plays an essential role in assisting protein folding. The GroEL-GroES system forms a nano-cage that allows encapsulation of the non-native substrate proteins and provides a physical environment optimized to promote and accelerate protein folding. In Desulforamulus reducens (strain ATCC BAA-1160 / DSM 100696 / MI-1) (Desulfotomaculum reducens), this protein is Chaperonin GroEL.